The following is a 390-amino-acid chain: MKILYCDCFAGIAGDMTVAALLDLGVPFEVVEGAVKQLPLPHSSYSLAVERTSRKGIAAARFVVHVEEHQPHRHYADIAAMIEESTLAEGVKEKAQRIFFRLAEAEAKVHGVEIGRVHFHEVGAVDSIVDIVGTAAALEWLGIDAVHAAPLPLGSGFVETAHGRLPVPAPATAELLRGLPIHGEAGSGERVTPTGAAILAALATGFGRAPAMTVTGVGCGAGTKDFDDIPNVMRLFMGEAEGGLLRDEVCIIETHIDDMNPEILGHVLERLMEAGALDAAFSPLQMKKNRPAVKLTVIARPGQRDELAALVLRETSAIGVRFYPASRLKLSREKEERPTSLGPVTVKVIRDGGRVVRVTPEYDACRRIAAEREMSLLEVYRIVEREAGEP.

It belongs to the LarC family.

In Geobacter metallireducens (strain ATCC 53774 / DSM 7210 / GS-15), this protein is Putative nickel insertion protein.